We begin with the raw amino-acid sequence, 1030 residues long: LPS-assembly protein LptD (1030 aa).

The N-terminal stretch at 1 to 32 (MEGPPTAAHAAAPLRTAVFLALAASWQQPAVA) is a signal peptide. The segment at 50–213 (VAKRKDGGAD…APAGWTCKPQ (164 aa)) is disordered. Residues 78-91 (LSQSNRAAPSTAVS) are compositionally biased toward polar residues. Residues 126-137 (TEDEEDEESESA) show a composition bias toward acidic residues. Residues 161 to 171 (GTPPARAPRPE) show a composition bias toward pro residues.

The protein belongs to the LptD family. As to quaternary structure, component of the lipopolysaccharide transport and assembly complex. Interacts with LptE and LptA.

It localises to the cell outer membrane. Together with LptE, is involved in the assembly of lipopolysaccharide (LPS) at the surface of the outer membrane. In Methylococcus capsulatus (strain ATCC 33009 / NCIMB 11132 / Bath), this protein is LPS-assembly protein LptD.